The sequence spans 654 residues: Macrolide export ATP-binding/permease protein MacB (654 aa).

In terms of domain architecture, ABC transporter spans 6-244 (IEISALNRIF…TSASSATDAA (239 aa)). 42-49 (GTSGSGKS) serves as a coordination point for ATP. The next 4 helical transmembrane spans lie at 279–299 (LLTMLGIIIGITAVVSIVAIG), 534–554 (IAVISLIVGGIGVMNIMLVSV), 584–604 (MVCLIGGGIGILLSFGVGALF), and 617–637 (VTAIVSAVVCSSLIGVLFGFL).

Belongs to the ABC transporter superfamily. Macrolide exporter (TC 3.A.1.122) family. As to quaternary structure, homodimer. Part of the tripartite efflux system MacAB-TolC, which is composed of an inner membrane transporter, MacB, a periplasmic membrane fusion protein, MacA, and an outer membrane component, TolC. The complex forms a large protein conduit and can translocate molecules across both the inner and outer membranes. Interacts with MacA.

It is found in the cell inner membrane. In terms of biological role, part of the tripartite efflux system MacAB-TolC. MacB is a non-canonical ABC transporter that contains transmembrane domains (TMD), which form a pore in the inner membrane, and an ATP-binding domain (NBD), which is responsible for energy generation. Confers resistance against macrolides. The chain is Macrolide export ATP-binding/permease protein MacB from Hahella chejuensis (strain KCTC 2396).